Here is a 157-residue protein sequence, read N- to C-terminus: SsrA-binding protein (157 aa).

Belongs to the SmpB family.

It localises to the cytoplasm. In terms of biological role, required for rescue of stalled ribosomes mediated by trans-translation. Binds to transfer-messenger RNA (tmRNA), required for stable association of tmRNA with ribosomes. tmRNA and SmpB together mimic tRNA shape, replacing the anticodon stem-loop with SmpB. tmRNA is encoded by the ssrA gene; the 2 termini fold to resemble tRNA(Ala) and it encodes a 'tag peptide', a short internal open reading frame. During trans-translation Ala-aminoacylated tmRNA acts like a tRNA, entering the A-site of stalled ribosomes, displacing the stalled mRNA. The ribosome then switches to translate the ORF on the tmRNA; the nascent peptide is terminated with the 'tag peptide' encoded by the tmRNA and targeted for degradation. The ribosome is freed to recommence translation, which seems to be the essential function of trans-translation. The sequence is that of SsrA-binding protein from Chlorobaculum tepidum (strain ATCC 49652 / DSM 12025 / NBRC 103806 / TLS) (Chlorobium tepidum).